The primary structure comprises 475 residues: Argininosuccinate lyase 1 (475 aa).

This sequence belongs to the lyase 1 family. Argininosuccinate lyase subfamily.

The protein localises to the cytoplasm. The catalysed reaction is 2-(N(omega)-L-arginino)succinate = fumarate + L-arginine. It participates in amino-acid biosynthesis; L-arginine biosynthesis; L-arginine from L-ornithine and carbamoyl phosphate: step 3/3. The chain is Argininosuccinate lyase 1 from Pseudomonas fluorescens (strain Pf0-1).